The chain runs to 2774 residues: Microtubule-associated protein 1A (2774 aa).

Phosphoserine occurs at positions 114, 117, 118, 121, and 155. Residue tyrosine 177 is modified to Phosphotyrosine. Residues 310–329 are disordered; it reads PSKIKHRADSKESLKAAPKT. Phosphoserine occurs at positions 319 and 322. Repeat 1 spans residues 336–338; that stretch reads KRE. The 11 X 3 AA repeats of K-K-[DE] stretch occupies residues 336–541; it reads KREEVLEEGA…TQDFEELKRE (206 aa). A compositionally biased stretch (basic and acidic residues) spans 342 to 390; the sequence is EEGAKEARSELAKELAKTEKKAKEPSEKPPEKPSKSERVRGESSEALKA. Disordered stretches follow at residues 342–718, 737–808, 845–939, 957–1078, 1093–1344, 1357–1646, 1693–1725, 1739–1843, and 1861–2644; these read EEGA…SFLS, TIPG…TELT, EDQS…VGKE, FGAP…QTGC, ETGE…ILPE, QKDG…SPEQ, ESTF…KDFQ, LAES…VPFS, and AELE…LVNG. Serine 384 is subject to Phosphoserine. The span at 391–406 shows a compositional bias: basic residues; the sequence is EKRRLIKDKAGKKHLK. 2 stretches are compositionally biased toward basic and acidic residues: residues 407–464 and 484–500; these read EKIS…KPDL and VKVD…ELSS. Repeat copies occupy residues 415 to 417, 420 to 422, 424 to 426, 427 to 429, 431 to 433, 436 to 438, 440 to 442, 444 to 446, and 449 to 451. Residue threonine 504 is modified to Phosphothreonine. Positions 506 to 516 are enriched in low complexity; sequence PAQKGAAPPAA. Phosphoserine is present on residues serine 526 and serine 527. Basic and acidic residues-rich tracts occupy residues 536–554 and 584–595; these read EELK…DTGL and EGEHVEREKEVV. Copy 11 of the repeat occupies 539–541; the sequence is KRE. Serine 604 and serine 611 each carry phosphoserine. Basic and acidic residues-rich tracts occupy residues 614–631 and 638–675; these read EVEK…REAE and AARE…ETKA. Serine 643 is subject to Phosphoserine. A Phosphothreonine modification is found at threonine 663. 4 positions are modified to phosphoserine: serine 666, serine 677, serine 690, and serine 785. Composition is skewed to polar residues over residues 845–858 and 869–881; these read EDQS…PQTE and TVTS…TEAT. Phosphoserine is present on residues serine 872, serine 875, serine 876, and serine 889. Phosphothreonine is present on threonine 892. Serine 894, serine 898, serine 907, serine 980, serine 990, serine 998, serine 1007, serine 1013, serine 1022, serine 1029, serine 1037, serine 1061, serine 1132, serine 1134, serine 1148, serine 1160, serine 1178, serine 1188, serine 1191, serine 1197, serine 1206, and serine 1209 each carry phosphoserine. Residues 1008 to 1028 are compositionally biased toward basic and acidic residues; sequence PVEDKSEPRDFQEDSWGETKH. Residues 1142 to 1157 show a composition bias toward polar residues; that stretch reads SVLSVVSPDTTKQEAT. Residues 1180-1190 are compositionally biased toward polar residues; the sequence is EDTQSLSFSEE. A compositionally biased stretch (polar residues) spans 1198–1212; that stretch reads LDISSKQLSPESLGT. The span at 1220–1236 shows a compositional bias: basic and acidic residues; that stretch reads LGKEERGPVMKAEDDSC. Serine 1252, serine 1280, serine 1301, serine 1304, and serine 1307 each carry phosphoserine. A compositionally biased stretch (low complexity) spans 1293–1308; it reads TSDSSLTKSPESLSSP. Composition is skewed to basic and acidic residues over residues 1317–1336, 1357–1409, 1416–1428, 1436–1479, and 1487–1574; these read WEGK…ETRQ, QKDG…EDQG, AEKD…RDTD, EPRD…EHSI, and RAPD…KADS. Serine 1504, serine 1568, serine 1574, and serine 1594 each carry phosphoserine. A compositionally biased stretch (basic and acidic residues) spans 1599–1613; the sequence is SKAREQEKKYWKEQD. A phosphoserine mark is found at serine 1622, serine 1643, serine 1715, serine 1742, serine 1757, serine 1763, and serine 1767. Over residues 1707–1718 the composition is skewed to polar residues; the sequence is TPLQHTPRSPWT. Threonine 1772 is subject to Phosphothreonine. Serine 1778 and serine 1784 each carry phosphoserine. Residues 1789 to 1803 show a composition bias toward polar residues; the sequence is TESTAPMRNEPTTPS. Pro residues predominate over residues 1818 to 1839; it reads LPPAPLSPAPAPPTPAPEPHTP. The segment covering 1873 to 1885 has biased composition (basic and acidic residues); that stretch reads KDYRKAEGEREGE. Serine 1897 is subject to Phosphoserine. Basic and acidic residues predominate over residues 1908-1930; that stretch reads ATRDTEQTEPEQREPTPYPDERS. Threonine 1923 carries the post-translational modification Phosphothreonine. A compositionally biased stretch (polar residues) spans 1984–1997; sequence SSPASPQNLQSDTP. Position 1988 is a phosphoserine (serine 1988). The segment covering 2008–2034 has biased composition (pro residues); it reads AVPPRQEPDPGPNVEPSITPPAVPPRA. Threonine 2026 is subject to Phosphothreonine. 2 positions are modified to phosphoserine: serine 2043 and serine 2077. Basic and acidic residues predominate over residues 2055–2092; it reads PDRRTPSPKETGRGHWDDGTNDSDLEKGAREQPEKETR. The span at 2115 to 2125 shows a compositional bias: low complexity; the sequence is SSLSSDSHLGS. A compositionally biased stretch (pro residues) spans 2144 to 2153; sequence PAPPQLPSPA. 6 positions are modified to phosphoserine: serine 2204, serine 2221, serine 2225, serine 2228, serine 2229, and serine 2260. Residues 2226–2237 are compositionally biased toward polar residues; sequence EGSSSEATTPVI. A compositionally biased stretch (low complexity) spans 2271-2287; the sequence is DLTPLSPAPSASLDLAP. Residues 2288 to 2298 are compositionally biased toward pro residues; sequence APAPAPAPAPG. Low complexity predominate over residues 2299–2309; it reads LPGDLGDGTLP. A compositionally biased stretch (basic and acidic residues) spans 2352-2364; it reads AEKEEAEAPHAWE. The residue at position 2424 (serine 2424) is a Phosphoserine. The segment covering 2477–2489 has biased composition (low complexity); sequence SASDSGSSQSDSD. Pro residues predominate over residues 2534–2550; sequence DPPPTPLPDPRPSPPRP. Residues 2565–2575 are compositionally biased toward basic and acidic residues; that stretch reads GRVERLREKGR. Positions 2613–2623 are enriched in low complexity; it reads RTVPRPRSTPS. A phosphoserine mark is found at serine 2620 and serine 2635.

Belongs to the MAP1 family. In terms of assembly, 3 different light chains, LC1 (a cleavage product of MAP1B), LC2 (a cleavage product of MAP1A) and LC3 (produced by one of the MAP1LC3 genes), can associate with the MAP1A or MAP1B heavy chains. Interacts with guanylate kinase-like domain of DLG1, DLG2 and DLG4. Binds to CSNK1D. Interacts with TIAM2. Interacts with ELAVL4. Post-translationally, phosphorylated by CSNK1D. LC2 is generated from MAP1A by proteolytic processing. It is free to associate with both MAP1A and MAP1B. As to expression, brain, heart and muscle.

It localises to the cytoplasm. The protein localises to the cytoskeleton. Its function is as follows. Structural protein involved in the filamentous cross-bridging between microtubules and other skeletal elements. The protein is Microtubule-associated protein 1A (Map1a) of Rattus norvegicus (Rat).